Reading from the N-terminus, the 428-residue chain is C4-dicarboxylate transport protein (428 aa).

9 helical membrane passes run 8–28 (SLYFQVLTAIAIGILLGHFYP), 44–64 (LIKMIIAPVIFCTVVTGIAGM), 76–96 (VALLYFEIVSTIALIIGLVIV), 142–162 (IGAFASGNILQVLLFAVLFGF), 184–204 (VIFGIINMIMRLAPIGAFGAM), 222–242 (LIVCFYITCILFVVVVLGSIA), 289–309 (VVGLVIPTGYSFNLDGTSIYL), 326–346 (IFHQITLLVVLLLSSKGAAGV), and 352–372 (IVLAATISAVGHLPVAGLALI).

The protein belongs to the dicarboxylate/amino acid:cation symporter (DAACS) (TC 2.A.23) family.

Its subcellular location is the cell inner membrane. Its function is as follows. Responsible for the transport of dicarboxylates such as succinate, fumarate, and malate from the periplasm across the membrane. The polypeptide is C4-dicarboxylate transport protein (Cronobacter sakazakii (strain ATCC BAA-894) (Enterobacter sakazakii)).